A 605-amino-acid chain; its full sequence is Elongation factor 4 (605 aa).

Residues 5 to 187 enclose the tr-type G domain; sequence ALIRNFSIIA…AVVERIPPPK (183 aa). GTP is bound by residues 17–22 and 134–137; these read DHGKST and NKID.

Belongs to the TRAFAC class translation factor GTPase superfamily. Classic translation factor GTPase family. LepA subfamily.

Its subcellular location is the cell inner membrane. It catalyses the reaction GTP + H2O = GDP + phosphate + H(+). Functionally, required for accurate and efficient protein synthesis under certain stress conditions. May act as a fidelity factor of the translation reaction, by catalyzing a one-codon backward translocation of tRNAs on improperly translocated ribosomes. Back-translocation proceeds from a post-translocation (POST) complex to a pre-translocation (PRE) complex, thus giving elongation factor G a second chance to translocate the tRNAs correctly. Binds to ribosomes in a GTP-dependent manner. This is Elongation factor 4 from Novosphingobium aromaticivorans (strain ATCC 700278 / DSM 12444 / CCUG 56034 / CIP 105152 / NBRC 16084 / F199).